The primary structure comprises 186 residues: Nicotinamide-nucleotide adenylyltransferase (186 aa).

The protein belongs to the archaeal NMN adenylyltransferase family.

It is found in the cytoplasm. The catalysed reaction is beta-nicotinamide D-ribonucleotide + ATP + H(+) = diphosphate + NAD(+). It functions in the pathway cofactor biosynthesis; NAD(+) biosynthesis; NAD(+) from nicotinamide D-ribonucleotide: step 1/1. The protein is Nicotinamide-nucleotide adenylyltransferase of Pyrococcus horikoshii (strain ATCC 700860 / DSM 12428 / JCM 9974 / NBRC 100139 / OT-3).